Here is a 157-residue protein sequence, read N- to C-terminus: Endoribonuclease YbeY (157 aa).

Residues H114, H118, and H124 each contribute to the Zn(2+) site.

The protein belongs to the endoribonuclease YbeY family. The cofactor is Zn(2+).

The protein resides in the cytoplasm. Its function is as follows. Single strand-specific metallo-endoribonuclease involved in late-stage 70S ribosome quality control and in maturation of the 3' terminus of the 16S rRNA. This Yersinia pseudotuberculosis serotype O:3 (strain YPIII) protein is Endoribonuclease YbeY.